The following is a 126-amino-acid chain: Holo-[acyl-carrier-protein] synthase (126 aa).

Mg(2+) is bound by residues aspartate 9 and glutamate 59.

This sequence belongs to the P-Pant transferase superfamily. AcpS family. Mg(2+) is required as a cofactor.

The protein localises to the cytoplasm. It carries out the reaction apo-[ACP] + CoA = holo-[ACP] + adenosine 3',5'-bisphosphate + H(+). Its function is as follows. Transfers the 4'-phosphopantetheine moiety from coenzyme A to a Ser of acyl-carrier-protein. The chain is Holo-[acyl-carrier-protein] synthase from Myxococcus xanthus (strain DK1622).